We begin with the raw amino-acid sequence, 563 residues long: (R)-mandelonitrile lyase 1 (563 aa).

Positions Met1–Ser27 are cleaved as a signal peptide. FAD-binding positions include Thr63–Ser64, Glu82–Arg83, Val129, Thr133, and Asn137–Val140. Residues Asn145 and Asn162 are each glycosylated (N-linked (GlcNAc...) asparagine). Val244 is an FAD binding site. Cys355 is a binding site for substrate. N-linked (GlcNAc...) asparagine glycosylation occurs at Asn379. A disulfide bridge connects residues Cys426 and Cys477. Substrate is bound at residue Tyr484. FAD-binding positions include Trp485 to His486 and Gly514. Residue His486 is the Proton donor of the active site. The Proton acceptor role is filled by His524. Position 525–526 (Pro525–Gln526) interacts with FAD.

This sequence belongs to the GMC oxidoreductase family. As to quaternary structure, monomer. FAD is required as a cofactor. Glycosylated. Seeds. Localized within cotyledonary parenchyma cells.

The protein localises to the vacuole. It localises to the aleurone grain. It catalyses the reaction (R)-mandelonitrile = benzaldehyde + hydrogen cyanide. Its function is as follows. Involved in cyanogenesis, the release of HCN from injured tissues. Catalyzes the stereospecific addition of HCN to a variety of aldehydes in vitro. It is a major seed constituent, and could have the additional role of a storage form for reduced nitrogen. In Prunus serotina (Black cherry), this protein is (R)-mandelonitrile lyase 1 (MDL1).